The primary structure comprises 437 residues: Protein farnesyltransferase subunit beta (437 aa).

5 PFTB repeats span residues 123–164 (ATDV…CIIG), 174–215 (REKL…SLTN), 222–263 (FEGT…VILK), 270–312 (LKSL…PLLH), and 332–374 (QQAL…SIAQ). (2E,6E)-farnesyl diphosphate is bound by residues 248–251 (HGGY) and 291–294 (RCNK). 2 residues coordinate Zn(2+): D297 and C299. (2E,6E)-farnesyl diphosphate is bound at residue 300–303 (YSFW). H362 is a binding site for Zn(2+). T436 is subject to Phosphothreonine.

Belongs to the protein prenyltransferase subunit beta family. Heterodimer of FNTA and FNTB. Zn(2+) serves as cofactor.

The catalysed reaction is L-cysteinyl-[protein] + (2E,6E)-farnesyl diphosphate = S-(2E,6E)-farnesyl-L-cysteinyl-[protein] + diphosphate. In terms of biological role, essential subunit of the farnesyltransferase complex. Catalyzes the transfer of a farnesyl moiety from farnesyl diphosphate to a cysteine at the fourth position from the C-terminus of several proteins having the C-terminal sequence Cys-aliphatic-aliphatic-X. The sequence is that of Protein farnesyltransferase subunit beta (FNTB) from Bos taurus (Bovine).